Here is a 304-residue protein sequence, read N- to C-terminus: UTP--glucose-1-phosphate uridylyltransferase 1 (304 aa).

Belongs to the UDPGP type 2 family.

The enzyme catalyses alpha-D-glucose 1-phosphate + UTP + H(+) = UDP-alpha-D-glucose + diphosphate. The protein operates within carbohydrate metabolism; nucleotide-sugar metabolism. This chain is UTP--glucose-1-phosphate uridylyltransferase 1 (hasC1), found in Streptococcus pyogenes serotype M1.